The chain runs to 75 residues: MPQISRYSDEQVEQLLAELLNVLEKHKAPTDLSLMVLGNMVTNLINTSIAPAQRQAIANSFARALQSSINEDKAH.

It belongs to the UPF0352 family.

In Shigella sonnei (strain Ss046), this protein is UPF0352 protein YejL.